Consider the following 376-residue polypeptide: Queuine tRNA-ribosyltransferase (376 aa).

Residue Asp-90 is the Proton acceptor of the active site. Residues 90–94 (DSGGF), Asp-144, Gln-193, and Gly-220 contribute to the substrate site. The segment at 251 to 257 (GVGTPED) is RNA binding. The Nucleophile role is filled by Asp-270. The segment at 275–279 (TRNAR) is RNA binding; important for wobble base 34 recognition. Zn(2+) contacts are provided by Cys-308, Cys-310, Cys-313, and His-339.

It belongs to the queuine tRNA-ribosyltransferase family. In terms of assembly, homodimer. Within each dimer, one monomer is responsible for RNA recognition and catalysis, while the other monomer binds to the replacement base PreQ1. Zn(2+) serves as cofactor.

The catalysed reaction is 7-aminomethyl-7-carbaguanine + guanosine(34) in tRNA = 7-aminomethyl-7-carbaguanosine(34) in tRNA + guanine. The protein operates within tRNA modification; tRNA-queuosine biosynthesis. Catalyzes the base-exchange of a guanine (G) residue with the queuine precursor 7-aminomethyl-7-deazaguanine (PreQ1) at position 34 (anticodon wobble position) in tRNAs with GU(N) anticodons (tRNA-Asp, -Asn, -His and -Tyr). Catalysis occurs through a double-displacement mechanism. The nucleophile active site attacks the C1' of nucleotide 34 to detach the guanine base from the RNA, forming a covalent enzyme-RNA intermediate. The proton acceptor active site deprotonates the incoming PreQ1, allowing a nucleophilic attack on the C1' of the ribose to form the product. After dissociation, two additional enzymatic reactions on the tRNA convert PreQ1 to queuine (Q), resulting in the hypermodified nucleoside queuosine (7-(((4,5-cis-dihydroxy-2-cyclopenten-1-yl)amino)methyl)-7-deazaguanosine). The chain is Queuine tRNA-ribosyltransferase from Cupriavidus metallidurans (strain ATCC 43123 / DSM 2839 / NBRC 102507 / CH34) (Ralstonia metallidurans).